A 524-amino-acid polypeptide reads, in one-letter code: Leucine-rich repeat-containing protein 1 (524 aa).

17 LRR repeats span residues 11 to 34, 35 to 58, 60 to 81, 83 to 105, 107 to 126, 127 to 149, 150 to 172, 173 to 196, 198 to 218, 219 to 242, 244 to 264, 265 to 288, 290 to 310, 311 to 334, 336 to 356, 357 to 380, and 382 to 405; these read NRHV…IYRY, ARSL…FFQL, KLRK…IANF, QLVE…SFCK, LQVA…SFPE, LQNL…NIGN, LYNL…SLTQ, LRRL…IGAL, HLKD…EIGN, LKNL…ISGL, SLTD…GIGK, LKKL…VGEC, SLTE…SIGK, LKKL…IGGC, SLTV…EVSQ, ATEL…LTAL, and LKAL…TDYT. The residue at position 480 (Thr-480) is a Phosphothreonine. Positions 484-512 form a coiled coil; the sequence is GELKHMKKTVENLRNDMNAAKGLDSNKNE.

In terms of assembly, interacts with DLG1 and DLG4. May form a complex with DLG1 and ERBIN, where interaction between LRRC1 and ERBIN is indirect. As to expression, expressed strongly in testis and placenta, followed by heart, lung, kidney, thyroid, trachea, colon, prostate and pancreas.

It localises to the cytoplasm. Its subcellular location is the membrane. The sequence is that of Leucine-rich repeat-containing protein 1 (LRRC1) from Homo sapiens (Human).